The primary structure comprises 459 residues: Alpha-N-acetylgalactosaminidase (459 aa).

The tat-type signal signal peptide spans 1–31; that stretch reads MHNIHRRHFLKAAGAVTAGLVTANIALNANA. NAD(+) contacts are provided by residues 64–65, D86, 135–138, 155–156, and N184; these read ER, WEWH, and EV. Substrate is bound by residues Y213, R232, 244–247, and Y326; that span reads YPTH. An NAD(+)-binding site is contributed by Y244.

It belongs to the Gfo/Idh/MocA family. Glycosyl hydrolase 109 subfamily. It depends on NAD(+) as a cofactor. In terms of processing, predicted to be exported by the Tat system. The position of the signal peptide cleavage has not been experimentally proven.

It carries out the reaction Cleavage of non-reducing alpha-(1-&gt;3)-N-acetylgalactosamine residues from human blood group A and AB mucin glycoproteins, Forssman hapten and blood group A lacto series glycolipids.. Functionally, glycosidase that has specific alpha-N-acetylgalactosaminidase activity. This Shewanella oneidensis (strain ATCC 700550 / JCM 31522 / CIP 106686 / LMG 19005 / NCIMB 14063 / MR-1) protein is Alpha-N-acetylgalactosaminidase (nagA).